We begin with the raw amino-acid sequence, 183 residues long: Oligoribonuclease (183 aa).

Residues 8 to 171 (LIWLDMEMTG…ADIRESIAEL (164 aa)) enclose the Exonuclease domain. Tyr129 is an active-site residue.

It belongs to the oligoribonuclease family.

The protein localises to the cytoplasm. In terms of biological role, 3'-to-5' exoribonuclease specific for small oligoribonucleotides. This is Oligoribonuclease from Aromatoleum aromaticum (strain DSM 19018 / LMG 30748 / EbN1) (Azoarcus sp. (strain EbN1)).